The chain runs to 346 residues: Peripherin-2 (346 aa).

The Cytoplasmic segment spans residues Met-1–Asn-24. A helical transmembrane segment spans residues Trp-25–Ile-43. The Lumenal portion of the chain corresponds to Glu-44–Pro-61. The helical transmembrane segment at Asn-62–Lys-80 threads the bilayer. At Ile-81–Lys-99 the chain is on the cytoplasmic side. The helical transmembrane segment at Leu-100–Arg-123 threads the bilayer. The Lumenal segment spans residues Gly-124 to Ser-264. An N-linked (GlcNAc...) asparagine glycan is attached at Asn-229. A helical membrane pass occupies residues Met-265–Leu-290. Residues Glu-291–Gly-346 lie on the Cytoplasmic side of the membrane. An interaction with MREG region spans residues Gln-341 to Gly-346.

Belongs to the PRPH2/ROM1 family. In terms of assembly, homodimer; disulfide-linked. Forms a homotetramer. Forms a heterotetramer with ROM1. Homotetramer and heterotetramer core complexes go on to form higher order complexes by formation of intermolecular disulfide bonds. Interacts with MREG. Interacts with STX3. Interacts with SNAP25. Retina (photoreceptor). In rim region of ROS (rod outer segment) disks.

Its subcellular location is the membrane. The protein resides in the cell projection. It localises to the cilium. The protein localises to the photoreceptor outer segment. It is found in the photoreceptor inner segment. Its function is as follows. Essential for retina photoreceptor outer segment disk morphogenesis, may also play a role with ROM1 in the maintenance of outer segment disk structure. Required for the maintenance of retinal outer nuclear layer thickness. Required for the correct development and organization of the photoreceptor inner segment. The chain is Peripherin-2 (Prph2) from Rattus norvegicus (Rat).